Here is a 462-residue protein sequence, read N- to C-terminus: Signal recognition particle protein (462 aa).

Residues 107–114 (GLQGAGKT), 190–194 (DTAGR), and 248–251 (TKVD) each bind GTP.

The protein belongs to the GTP-binding SRP family. SRP54 subfamily. As to quaternary structure, part of the signal recognition particle protein translocation system, which is composed of SRP and FtsY. SRP is a ribonucleoprotein composed of Ffh and a 4.5S RNA molecule.

It is found in the cytoplasm. It carries out the reaction GTP + H2O = GDP + phosphate + H(+). Involved in targeting and insertion of nascent membrane proteins into the cytoplasmic membrane. Binds to the hydrophobic signal sequence of the ribosome-nascent chain (RNC) as it emerges from the ribosomes. The SRP-RNC complex is then targeted to the cytoplasmic membrane where it interacts with the SRP receptor FtsY. Interaction with FtsY leads to the transfer of the RNC complex to the Sec translocase for insertion into the membrane, the hydrolysis of GTP by both Ffh and FtsY, and the dissociation of the SRP-FtsY complex into the individual components. The polypeptide is Signal recognition particle protein (Haemophilus influenzae (strain ATCC 51907 / DSM 11121 / KW20 / Rd)).